A 123-amino-acid chain; its full sequence is Small ribosomal subunit protein uS12cz/uS12cy (123 aa).

Belongs to the universal ribosomal protein uS12 family. As to quaternary structure, part of the 30S ribosomal subunit.

The protein localises to the plastid. Its subcellular location is the chloroplast. Functionally, with S4 and S5 plays an important role in translational accuracy. Located at the interface of the 30S and 50S subunits. The protein is Small ribosomal subunit protein uS12cz/uS12cy (rps12-A) of Gossypium barbadense (Sea Island cotton).